The sequence spans 168 residues: Cysteine-rich perinuclear theca protein 1 (168 aa).

The disordered stretch occupies residues 144 to 168; it reads NVSDPEEVPPCLDSDPFPNGDLASS.

Specifically expressed in spermatozoa (at protein level). Detected from the elongated spermatid stage onwards; not found in immature germ cells or somatic cells (at protein level).

Its subcellular location is the cytoplasm. It localises to the cytoskeleton. The protein resides in the perinuclear theca. The polypeptide is Cysteine-rich perinuclear theca protein 1 (Mus musculus (Mouse)).